Here is a 199-residue protein sequence, read N- to C-terminus: 7-methyl-GTP pyrophosphatase (199 aa).

The active-site Proton acceptor is the aspartate 76.

It belongs to the Maf family. YceF subfamily. The cofactor is a divalent metal cation.

It is found in the cytoplasm. The catalysed reaction is N(7)-methyl-GTP + H2O = N(7)-methyl-GMP + diphosphate + H(+). Nucleoside triphosphate pyrophosphatase that hydrolyzes 7-methyl-GTP (m(7)GTP). May have a dual role in cell division arrest and in preventing the incorporation of modified nucleotides into cellular nucleic acids. This chain is 7-methyl-GTP pyrophosphatase, found in Rhizobium meliloti (strain 1021) (Ensifer meliloti).